The sequence spans 334 residues: MAFNLRNRNFLKLLDFSTKEIQFLLELSAELKKAKYAGTEQKKLQGKNIALIFEKSSTRTRCAFEVAAFDQGAQVSYIGPSGSQIGHKESMKDTARVLGRMYDGIEYRGFGQSIVEELGTYASVPVWNGLTDEFHPTQILADFLTMKEHGRGKQLHNMTFAYLGDARNNMGNSLMVGAAKMGMDIRLVAPKAFWPEEALVATCQEIAQQTGAKITLTENVEEGVKGCDFLYTDVWVSMGESAEAWDERVALMTPYQINMDVIKQTGNPHVKFMHCLPAFHNDETTVGKEVAEKYGMKGLEVTEEVFESEYSIVFDEAENRMHTIKAVMVATLGS.

Carbamoyl phosphate is bound by residues 57-60, Gln84, Arg108, and 135-138; these read STRT and HPTQ. L-ornithine-binding positions include Asn169, Asp233, and 237-238; that span reads SM. Residues 275-276 and Arg320 contribute to the carbamoyl phosphate site; that span reads CL.

This sequence belongs to the aspartate/ornithine carbamoyltransferase superfamily. OTCase family.

It is found in the cytoplasm. The catalysed reaction is carbamoyl phosphate + L-ornithine = L-citrulline + phosphate + H(+). Its pathway is amino-acid biosynthesis; L-arginine biosynthesis; L-arginine from L-ornithine and carbamoyl phosphate: step 1/3. In terms of biological role, reversibly catalyzes the transfer of the carbamoyl group from carbamoyl phosphate (CP) to the N(epsilon) atom of ornithine (ORN) to produce L-citrulline. This Vibrio campbellii (strain ATCC BAA-1116) protein is Ornithine carbamoyltransferase.